Consider the following 101-residue polypeptide: Small ribosomal subunit protein uS14 (101 aa).

The segment at 1–25 is disordered; the sequence is MAKVSAIQKNKSRQKKSQRLHNKRS. Residues 10-25 show a composition bias toward basic residues; the sequence is NKSRQKKSQRLHNKRS.

It belongs to the universal ribosomal protein uS14 family. Part of the 30S ribosomal subunit. Contacts proteins S3 and S10.

Its function is as follows. Binds 16S rRNA, required for the assembly of 30S particles and may also be responsible for determining the conformation of the 16S rRNA at the A site. In Rickettsia typhi (strain ATCC VR-144 / Wilmington), this protein is Small ribosomal subunit protein uS14.